Here is a 535-residue protein sequence, read N- to C-terminus: MRLRNGTVATALAFITSFLTLSWYTTWQNGKEKLIAYQREFLALKERLRIAEHRISQRSSELNTIVQQFKRVGAETNGSKDALNKFSDNTLKLLKELTSKKSLQVPSIYYHLPHLLKNEGSLRPAVQIGNGRTGVSIVMGIPTVKREVKSYLIETLHSLIDNLYPEEKLDCVIVVFIGETDTDYVHGVVANLEKEFSKEISSGLVEVISPPESYYPDLTNLKETFGDSKERVRWRTKQNLDYCFLMMYAQEKGIYYIQLEDDIIVKQNYFNTIKNFALQLSSEEWMILEFSQLGFIGKMFQAPDLTLIVEFIFMFYKEKPIDWLLDHILWVKVCNPEKDAKHCDRQKANLRIRFRPSLFQHVGLHSSLSGKIQKLTDKDYMKPLLLKIHVNPPAEVSTSLKVYQGHTLEKTYMGEDFFWAITPIAGDYILFKFDKPVNVESYLFHSGNQEHPGDILLNTTVEVLPFKSEGLEISKETKDKRLEDGYFRIGKFENGVAEGMVDPSLNPISAFRLSVIQNSAVWAILNEIHIKKATK.

Residues 1 to 4 (MRLR) lie on the Cytoplasmic side of the membrane. A helical; Signal-anchor for type II membrane protein transmembrane segment spans residues 5 to 27 (NGTVATALAFITSFLTLSWYTTW). Residues 28-63 (QNGKEKLIAYQREFLALKERLRIAEHRISQRSSELN) adopt a coiled-coil conformation. Residues 28 to 535 (QNGKEKLIAY…NEIHIKKATK (508 aa)) lie on the Lumenal side of the membrane. Residues Asn-77 and Asn-458 are each glycosylated (N-linked (GlcNAc...) asparagine). Ser-474 is modified (phosphoserine).

Belongs to the glycosyltransferase 54 family. A divalent metal cation is required as a cofactor. In terms of processing, N-glycosylated.

It localises to the golgi apparatus membrane. It is found in the secreted. It catalyses the reaction N(4)-{beta-D-GlcNAc-(1-&gt;2)-alpha-D-Man-(1-&gt;3)-[beta-D-GlcNAc-(1-&gt;2)-alpha-D-Man-(1-&gt;6)]-beta-D-Man-(1-&gt;4)-beta-D-GlcNAc-(1-&gt;4)-beta-D-GlcNAc}-L-asparaginyl-[protein] + UDP-N-acetyl-alpha-D-glucosamine = N(4)-{beta-D-GlcNAc-(1-&gt;2)-[beta-D-GlcNAc-(1-&gt;4)]-alpha-D-Man-(1-&gt;3)-[beta-D-GlcNAc-(1-&gt;2)-alpha-D-Man-(1-&gt;6)]-beta-D-Man-(1-&gt;4)-beta-D-GlcNAc-(1-&gt;4)-beta-D-GlcNAc}-L-asparaginyl-[protein] + UDP + H(+). The catalysed reaction is an N(4)-{beta-D-GlcNAc-(1-&gt;2)-alpha-D-Man-(1-&gt;3)-[alpha-D-Man-(1-&gt;6)]-beta-D-Man-(1-&gt;4)-beta-D-GlcNAc-(1-&gt;4)-beta-D-GlcNAc}-L-asparaginyl-[protein] + UDP-N-acetyl-alpha-D-glucosamine = an N(4)-{beta-D-GlcNAc-(1-&gt;2)-[beta-D-GlcNAc-(1-&gt;4)]-alpha-D-Man-(1-&gt;3)-[alpha-D-Man-(1-&gt;6)]-beta-D-Man-(1-&gt;4)-beta-D-GlcNAc-(1-&gt;4)-beta-D-GlcNAc}-L-asparaginyl-[protein] + UDP + H(+). The enzyme catalyses an N(4)-{beta-D-GlcNAc-(1-&gt;2)-alpha-D-Man-(1-&gt;3)-[beta-D-GlcNAc-(1-&gt;2)-[beta-D-GlcNAc-(1-&gt;6)]-alpha-D-Man-(1-&gt;6)]-beta-D-Man-(1-&gt;4)-beta-D-GlcNAc-(1-&gt;4)-beta-D-GlcNAc}-L-asparaginyl-[protein] + UDP-N-acetyl-alpha-D-glucosamine = an N(4)-{beta-D-GlcNAc-(1-&gt;2)-[beta-D-GlcNAc-(1-&gt;4)]-alpha-D-Man-(1-&gt;3)-[beta-D-GlcNAc-(1-&gt;2)-[beta-D-GlcNAc-(1-&gt;6)]-alpha-D-Man-(1-&gt;6)]-beta-D-Man-(1-&gt;4)-beta-D-GlcNAc-(1-&gt;4)-beta-D-GlcNAc}-L-asparaginyl-[protein] + UDP + H(+). It carries out the reaction an N(4)-{beta-D-GlcNAc-(1-&gt;2)-alpha-D-Man-(1-&gt;3)-[beta-D-GlcNAc-(1-&gt;2)-alpha-D-Man-(1-&gt;6)]-beta-D-Man-(1-&gt;4)-beta-D-GlcNAc-(1-&gt;4)-[alpha-L-Fuc-(1-&gt;6)]-beta-D-GlcNAc}-L-asparaginyl-[protein] + UDP-N-acetyl-alpha-D-glucosamine = N(4)-{beta-D-GlcNAc-(1-&gt;2)-[beta-D-GlcNAc-(1-&gt;4)]-alpha-D-Man-(1-&gt;3)-[beta-D-GlcNAc-(1-&gt;2)-alpha-D-Man-(1-&gt;6)]-beta-D-Man-(1-&gt;4)-beta-D-GlcNAc-(1-&gt;4)-[alpha-L-Fuc-(1-&gt;6)]-beta-D-GlcNAc}-asparaginyl-[protein] + UDP + H(+). It catalyses the reaction an N(4)-{beta-D-GlcNAc-(1-&gt;2)-alpha-D-Man-(1-&gt;3)-[beta-D-Gal-(1-&gt;4)-beta-D-GlcNAc-(1-&gt;2)-alpha-D-Man-(1-&gt;6)]-beta-D-Man-(1-&gt;4)-beta-D-GlcNAc-(1-&gt;4)-beta-D-GlcNAc}-L-asparaginyl-[protein] + UDP-N-acetyl-alpha-D-glucosamine = an N(4)-{beta-D-GlcNAc-(1-&gt;2)-[beta-D-GlcNAc-(1-&gt;4)]-alpha-D-Man-(1-&gt;3)-[beta-D-Gal-(1-&gt;4)-beta-D-GlcNAc-(1-&gt;2)-alpha-D-Man-(1-&gt;6)]-beta-D-Man-(1-&gt;4)-beta-D-GlcNAc-(1-&gt;4)-beta-D-GlcNAc}-L-asparaginyl-[protein] + UDP + H(+). The catalysed reaction is N(4)-{beta-D-GlcNAc-(1-&gt;2)-alpha-D-Man-(1-&gt;3)-[alpha-D-Man-(1-&gt;3)-{alpha-D-Man-(1-&gt;6)}-alpha-D-Man-(1-&gt;6)]-beta-D-Man-(1-&gt;4)-beta-D-GlcNAc-(1-&gt;4)-beta-D-GlcNAc}-asparaginyl-[protein] + UDP-N-acetyl-alpha-D-glucosamine = N(4)-{beta-D-GlcNAc-(1-&gt;2)-[beta-D-GlcNAc-(1-&gt;4)]-alpha-D-Man-(1-&gt;3)-[alpha-D-Man-(1-&gt;3)-{alpha-D-Man-(1-&gt;6)}-alpha-D-Man-(1-&gt;6)]-beta-D-Man-(1-&gt;4)-beta-D-GlcNAc-(1-&gt;4)-beta-D-GlcNAc}-asparaginyl-[protein] + UDP + H(+). The enzyme catalyses N(4)-{beta-D-GlcNAc-(1-&gt;2)-alpha-D-Man-(1-&gt;3)-beta-D-Man-(1-&gt;4)-beta-D-GlcNAc-(1-&gt;4)-beta-D-GlcNAc}-asparaginyl-[protein] + UDP-N-acetyl-alpha-D-glucosamine = N(4)-{beta-D-GlcNAc-(1-&gt;2)-[beta-D-GlcNAc-(1-&gt;4)]-alpha-D-Man-(1-&gt;3)-beta-D-Man-(1-&gt;4)-beta-D-GlcNAc-(1-&gt;4)-beta-D-GlcNAc}-asparaginyl-[protein] + UDP + H(+). Its pathway is protein modification; protein glycosylation. With respect to regulation, inhibited by UDP. Its function is as follows. Glycosyltransferase that catalyze the transfer of GlcNAc from UDP-GlcNAc to the GlcNAcbeta1-2Manalpha1-3 arm of the core structure of N-linked glycans through a beta1-4 linkage and participates in the production of tri- and tetra-antennary N-linked sugar chains. Involved in glucose transport by mediating SLC2A2/GLUT2 glycosylation, thereby controlling cell-surface expression of SLC2A2 in pancreatic beta cells. The protein is Alpha-1,3-mannosyl-glycoprotein 4-beta-N-acetylglucosaminyltransferase A of Macaca fascicularis (Crab-eating macaque).